The chain runs to 229 residues: Large ribosomal subunit protein uL1 (229 aa).

This sequence belongs to the universal ribosomal protein uL1 family. In terms of assembly, part of the 50S ribosomal subunit.

In terms of biological role, binds directly to 23S rRNA. The L1 stalk is quite mobile in the ribosome, and is involved in E site tRNA release. Its function is as follows. Protein L1 is also a translational repressor protein, it controls the translation of the L11 operon by binding to its mRNA. The chain is Large ribosomal subunit protein uL1 from Pelagibacter ubique (strain HTCC1062).